The primary structure comprises 350 residues: MIYPLLLSALPLLSSAALTYRGADISSLLIEEDAGISYKNLNGETQALEDILVNNGVNSIRQRVWVDPSDGSYDLDYNLKLAKRVQAAGMSIYLDLHLSDTWADPSDQTTPTGWSTTDIDTLTWQLYNYTLEVCNTFAENDIDVEIVSIGNEISSGLLWPLGKTSNYDNIAKLLHSGAWGVKDSDLTTTPKIMIHLDNGWDWDEQEYFYKTVLATGSLLSTDFDLMGVSYYPFYSSEATLSSLKTSLTNMQSNYDKPVVVVETNWPVSCPDPEYSFPSDLTSIPFSAAGQEEFLEKLAEVVEGVTDGLGIYYWEPAWIDNAGLGSSCADNLMVDVNTDEVLESVTVFEDL.

A signal peptide spans 1-16 (MIYPLLLSALPLLSSA). Residue Asn-128 is glycosylated (N-linked (GlcNAc...) asparagine). The Proton donor role is filled by Glu-152. Residue Glu-262 is the Nucleophile of the active site.

The protein belongs to the glycosyl hydrolase 53 family.

Its subcellular location is the secreted. The catalysed reaction is The enzyme specifically hydrolyzes (1-&gt;4)-beta-D-galactosidic linkages in type I arabinogalactans.. Functionally, endogalactanase involved in the degradation of plant cell wall polysaccharides, and more particularly of hairy regions of pectin. This is Probable arabinogalactan endo-beta-1,4-galactanase A (galA) from Aspergillus tubingensis.